A 354-amino-acid polypeptide reads, in one-letter code: Putative Xaa-Pro aminopeptidase (354 aa).

Residues aspartate 213, aspartate 224, histidine 290, glutamate 319, and glutamate 333 each contribute to the Mn(2+) site.

It belongs to the peptidase M24B family. Mn(2+) serves as cofactor.

The catalysed reaction is Release of any N-terminal amino acid, including proline, that is linked to proline, even from a dipeptide or tripeptide.. The protein is Putative Xaa-Pro aminopeptidase (pepP) of Mycoplasma pneumoniae (strain ATCC 29342 / M129 / Subtype 1) (Mycoplasmoides pneumoniae).